The chain runs to 436 residues: Retinoic acid receptor RXR (436 aa).

The tract at residues 1-108 (MDRSEGMDTL…GPSPSPGLPH (108 aa)) is disordered. Positions 1 to 116 (MDRSEGMDTL…PHSSLHTKHI (116 aa)) are modulating. Positions 13-22 (SMPSGMSMGM) are enriched in low complexity. 2 stretches are compositionally biased toward polar residues: residues 40–49 (SSLTSPTSTH) and 62–76 (MASSTQPSPGPQQMH). Residues 85-98 (SSMGSPPMLCLSPS) are compositionally biased toward low complexity. 2 NR C4-type zinc fingers span residues 117–137 (CAICGDRASGKHYGVYSCEGC) and 153–172 (CRDDKNCMIDKRQRNRCQYC). The segment at residues 117 to 182 (CAICGDRASG…RYMKCLSMGM (66 aa)) is a DNA-binding region (nuclear receptor). A hinge region spans residues 183 to 206 (KREAVQEERQRVKEKGDGEVESTS). The segment covering 189–200 (EERQRVKEKGDG) has biased composition (basic and acidic residues). A disordered region spans residues 189–209 (EERQRVKEKGDGEVESTSGAN). The 224-residue stretch at 209–432 (NNDMPVEQIL…TFLMEMLENP (224 aa)) folds into the NR LBD domain. Positions 290 and 301 each coordinate 9-cis-retinoate.

This sequence belongs to the nuclear hormone receptor family. NR2 subfamily. In terms of assembly, homodimer (via ligand-binding domain). Heterodimer. Homotetramer consisting of 2 canonical homodimers. Within the tetramer, each monomer binds one molecule of 9C-RA and a NCOA1-derived peptide containing an L-X(2)-L-L motif.

Its subcellular location is the nucleus. Functionally, ligand-dependent transcription factor probably involved in the retinoic acid response pathway. Binds 9-cis-retinoic acid (9C-RA) and, to a lesser extent, docosahexaenoic acid (DHA), phytanic acid, methoprene acid and oleic acid. Binds to double-stranded DNA sequences containing direct repeats (DR) with the consensus sequence 5'-[AG]GGTCA-3' and 1, 2, 3, 4 or 5 nucleotides in between (DR1, DR2, DR3. DR4 and DR5, respectively). Binding to DR1 is strongest. Transactivates gene expression when 9C-RA or DHA is bound. The polypeptide is Retinoic acid receptor RXR (Biomphalaria glabrata (Bloodfluke planorb)).